The following is a 227-amino-acid chain: tRNA (guanine-N(1)-)-methyltransferase (227 aa).

S-adenosyl-L-methionine contacts are provided by residues glycine 110 and 129-134 (IGDYVL).

This sequence belongs to the RNA methyltransferase TrmD family. Homodimer.

It is found in the cytoplasm. It catalyses the reaction guanosine(37) in tRNA + S-adenosyl-L-methionine = N(1)-methylguanosine(37) in tRNA + S-adenosyl-L-homocysteine + H(+). Its function is as follows. Specifically methylates guanosine-37 in various tRNAs. This is tRNA (guanine-N(1)-)-methyltransferase from Mycoplasmopsis synoviae (strain 53) (Mycoplasma synoviae).